A 145-amino-acid chain; its full sequence is MYASVIIYTLVALCGVMSSPVQEAEVAPRAIEPRMPTFADIPFPRFPSHNNHHHNEKDKGKDKGNGKGVDKNNGGGCDTGTNTQLNACSAGSPYCCSSDGNGGHICSNTTACDQKVICCNNNNGFQICIGEIDFNVPVTINIIYD.

A signal peptide spans 1 to 18 (MYASVIIYTLVALCGVMS). Intrachain disulfides connect Cys88–Cys118, Cys95–Cys112, Cys96–Cys106, and Cys119–Cys128. Residue Asn108 is glycosylated (N-linked (GlcNAc...) asparagine).

Belongs to the fungal hydrophobin family. As to quaternary structure, self-assembles to form functional amyloid fibrils called rodlets. Self-assembly into fibrillar rodlets occurs spontaneously at hydrophobic:hydrophilic interfaces and the rodlets further associate laterally to form amphipathic monolayers.

It is found in the secreted. It localises to the cell wall. Its function is as follows. Aerial growth, conidiation, and dispersal of filamentous fungi in the environment rely upon a capability of their secreting small amphipathic proteins called hydrophobins (HPBs) with low sequence identity. Class I can self-assemble into an outermost layer of rodlet bundles on aerial cell surfaces, conferring cellular hydrophobicity that supports fungal growth, development and dispersal; whereas Class II form highly ordered films at water-air interfaces through intermolecular interactions but contribute nothing to the rodlet structure. Hyd1 is a class I hydrophobin that is involved in plant root attachment and colonization, and that might also protect the growing hyphae from locally synthesized plant defense compounds during the first stages of cucumber interaction, allowing this opportunistic, non-pathogenic fungus to colonize the intercellular spaces of the plant root. In Trichoderma asperellum (Filamentous fungus), this protein is Class I hydrophobin 1.